Here is a 101-residue protein sequence, read N- to C-terminus: Urease subunit beta (101 aa).

This sequence belongs to the urease beta subunit family. Heterotrimer of UreA (gamma), UreB (beta) and UreC (alpha) subunits. Three heterotrimers associate to form the active enzyme.

Its subcellular location is the cytoplasm. The enzyme catalyses urea + 2 H2O + H(+) = hydrogencarbonate + 2 NH4(+). It participates in nitrogen metabolism; urea degradation; CO(2) and NH(3) from urea (urease route): step 1/1. The polypeptide is Urease subunit beta (Actinobacillus pleuropneumoniae serotype 5b (strain L20)).